The chain runs to 171 residues: Shikimate kinase (171 aa).

14-19 (GAGKST) contributes to the ATP binding site. A Mg(2+)-binding site is contributed by Ser18. Residues Asp36, Arg60, and Gly82 each coordinate substrate. ATP is bound at residue Arg120. Substrate is bound at residue Arg139. Gln156 is an ATP binding site.

The protein belongs to the shikimate kinase family. As to quaternary structure, monomer. Mg(2+) serves as cofactor.

It is found in the cytoplasm. It catalyses the reaction shikimate + ATP = 3-phosphoshikimate + ADP + H(+). It functions in the pathway metabolic intermediate biosynthesis; chorismate biosynthesis; chorismate from D-erythrose 4-phosphate and phosphoenolpyruvate: step 5/7. In terms of biological role, catalyzes the specific phosphorylation of the 3-hydroxyl group of shikimic acid using ATP as a cosubstrate. The sequence is that of Shikimate kinase from Shewanella sp. (strain MR-4).